The sequence spans 201 residues: Small ribosomal subunit protein uS4B (201 aa).

The S4 RNA-binding domain occupies 93–156 (QRLDTVVYRL…RSLAVVRESL (64 aa)).

The protein belongs to the universal ribosomal protein uS4 family. In terms of assembly, part of the 30S ribosomal subunit. Contacts protein S5. The interaction surface between S4 and S5 is involved in control of translational fidelity.

Functionally, one of the primary rRNA binding proteins, it binds directly to 16S rRNA where it nucleates assembly of the body of the 30S subunit. With S5 and S12 plays an important role in translational accuracy. This Symbiobacterium thermophilum (strain DSM 24528 / JCM 14929 / IAM 14863 / T) protein is Small ribosomal subunit protein uS4B.